Here is a 380-residue protein sequence, read N- to C-terminus: MKKLKVMTVFGTRPEAIKMAPLVLELKKYPEIDSYVTVTAQHRQMLDQVLDAFHIKPDFDLNIMKERQTLAEITSNALVRLDELFKDIKPDIVLVHGDTTTTFAGSLAAFYHQIAVGHVEAGLRTGNKYSPFPEELNRQMTGAIADLHFAPTGQAKDNLLKENKKADSIFVTGNTAIDALNTTVRDGYSHPVLDQVGEDKMILLTAHRRENLGEPMENMFKAIRRIVGEFEDVQVVYPVHLNPVVREAAHKHFGDSDRVHLIEPLEVIDFHNFAAKSHFILTDSGGVQEEAPSLGKPVLVLRDTTERPEGVEAGTLKLAGTDEENIYQLAKQLLTDPDEYKKMSQASNPYGDGEASRRIVEELLFHYGYRKEQPDSFTGK.

This sequence belongs to the UDP-N-acetylglucosamine 2-epimerase family.

The protein localises to the cytoplasm. The enzyme catalyses UDP-N-acetyl-alpha-D-glucosamine = UDP-N-acetyl-alpha-D-mannosamine. It functions in the pathway cell wall biogenesis; poly(glycerol phosphate) teichoic acid biosynthesis. Catalyzes the conversion of UDP-N-acetylglucosamine into UDP-N-acetylmannosamine, a precursor of the teichoic acid linkage unit. The chain is UDP-N-acetylglucosamine 2-epimerase (mnaA) from Bacillus subtilis (strain 168).